Consider the following 517-residue polypeptide: Synaptic vesicular amine transporter (517 aa).

The Cytoplasmic segment spans residues 1–20; sequence MALSDLVLLRWLRDSRHSRK. Residues 21–41 traverse the membrane as a helical segment; it reads LILFIVFLALLLDNMLLTVVV. The Extracellular segment spans residues 42-132; that stretch reads PIIPSYLYSI…EDKDLLNENV (91 aa). N-linked (GlcNAc...) asparagine glycans are attached at residues asparagine 56, asparagine 83, asparagine 84, asparagine 91, and asparagine 113. The interval 100–119 is disordered; it reads ESPKATTTQHTVTNTTVPPD. Residues 105-115 show a composition bias toward low complexity; the sequence is TTTQHTVTNTT. Cysteine 120 and cysteine 327 are disulfide-bonded. A helical transmembrane segment spans residues 133-153; the sequence is QVGLLFASKATVQLLTNPFIG. Residues 154-162 lie on the Cytoplasmic side of the membrane; that stretch reads LLTNRIGYP. Residues 163–183 form a helical membrane-spanning segment; the sequence is IPMFAGFCIMFISTVMFAFSS. Residues 184–192 lie on the Extracellular side of the membrane; it reads SYAFLLIAR. The chain crosses the membrane as a helical span at residues 193–213; the sequence is SLQGIGSSCSSVAGMGMLASV. The Cytoplasmic portion of the chain corresponds to 214-222; sequence YTDDEERGN. Residues 223–245 traverse the membrane as a helical segment; sequence AMGIALGGLAMGVLVGPPFGSVL. Residues leucine 231 and valine 235 each contribute to the serotonin site. Topologically, residues 246–251 are extracellular; the sequence is YEFVGK. The helical transmembrane segment at 252 to 274 threads the bilayer; that stretch reads TAPFLVLAALVLLDGAIQLFVLQ. Topologically, residues 275–294 are cytoplasmic; sequence PSRVQPESQKGTPLTTLLKD. The chain crosses the membrane as a helical span at residues 295-314; that stretch reads PYILIAAGSICFANMGIAML. Residues asparagine 308, isoleucine 311, glutamate 315, phenylalanine 337, and tyrosine 344 each contribute to the serotonin site. Residues 315–331 lie on the Extracellular side of the membrane; sequence EPALPIWMMETMCSRKW. A helical transmembrane segment spans residues 332–355; sequence QLGVAFLPASISYLIGTNIFGILA. Over 356 to 360 the chain is Cytoplasmic; the sequence is HKMGR. A helical membrane pass occupies residues 361–381; the sequence is WLCALLGMIVVGISILCIPFA. Topologically, residues 382–392 are extracellular; the sequence is KNIYGLIAPNF. The helical transmembrane segment at 393 to 413 threads the bilayer; it reads GVGFAIGMVDSSMMPIMGYLV. Serotonin is bound at residue aspartate 402. Topologically, residues 414–417 are cytoplasmic; the sequence is DLRH. Residues 418–438 form a helical membrane-spanning segment; sequence VSVYGSVYAIADVAFCMGYAI. Tyrosine 436 lines the serotonin pocket. Over 439–443 the chain is Extracellular; the sequence is GPSAG. The helical transmembrane segment at 444–465 threads the bilayer; the sequence is GAIAKAIGFPWLMTIIGIIDIV. Residues 466 to 517 lie on the Cytoplasmic side of the membrane; that stretch reads FAPLCFFLRSPPAKEEKMAILMDHNCPIKTKMYTQNNVQPYPVGDDEESESD. Serine 514 and serine 516 each carry phosphoserine; by CK2.

The protein belongs to the major facilitator superfamily. Vesicular transporter family. Interacts with SLC6A3. As to expression, expressed in striata and substantia nigra.

It is found in the cytoplasmic vesicle. The protein resides in the secretory vesicle. It localises to the synaptic vesicle membrane. The protein localises to the secretory vesicle membrane. Its subcellular location is the cell projection. It is found in the axon. The protein resides in the dendrite. The enzyme catalyses serotonin(in) + 2 H(+)(out) = serotonin(out) + 2 H(+)(in). It carries out the reaction dopamine(in) + 2 H(+)(out) = dopamine(out) + 2 H(+)(in). It catalyses the reaction histamine(in) + 2 H(+)(out) = histamine(out) + 2 H(+)(in). Its activity is regulated as follows. Strongly inhibited by reserpine and tetrabenazine. Also inhibited to a lesser extent by ketanserin and fenfluramine. Reserpine and ketanserin inhibit by blocking the substrate-binding pocket. Tetrabenazine traps SLC18A2/VMAT2 in an occluded conformation and its inhibition is specific to SLC18A2/VMAT2 but not SLC18A1/VMAT1. Electrogenic antiporter that exchanges one cationic monoamine with two intravesicular protons across the membrane of secretory and synaptic vesicles. Uses the electrochemical proton gradient established by the V-type proton-pump ATPase to accumulate high concentrations of monoamines inside the vesicles prior to their release via exocytosis. Transports a variety of catecholamines such as dopamine, adrenaline and noradrenaline, histamine, and indolamines such as serotonin. Regulates the transvesicular monoaminergic gradient that determines the quantal size. Mediates somatodendritic dopamine release in hippocampal neurons, likely as part of a regulated secretory pathway that integrates retrograde synaptic signals. Acts as a primary transporter for striatal dopamine loading ensuring impulse-dependent release of dopamine at the synaptic cleft. Responsible for histamine and serotonin storage and subsequent corelease from mast cell granules. The chain is Synaptic vesicular amine transporter (Slc18a2) from Mus musculus (Mouse).